We begin with the raw amino-acid sequence, 171 residues long: Ribosome maturation factor RimM (171 aa).

Residues 96 to 169 (EGEFFIADMI…KMIIDPIKGM (74 aa)) form the PRC barrel domain.

It belongs to the RimM family. As to quaternary structure, binds ribosomal protein uS19.

It localises to the cytoplasm. In terms of biological role, an accessory protein needed during the final step in the assembly of 30S ribosomal subunit, possibly for assembly of the head region. Essential for efficient processing of 16S rRNA. May be needed both before and after RbfA during the maturation of 16S rRNA. It has affinity for free ribosomal 30S subunits but not for 70S ribosomes. In Clostridioides difficile (strain 630) (Peptoclostridium difficile), this protein is Ribosome maturation factor RimM.